We begin with the raw amino-acid sequence, 529 residues long: AAA ATPase forming ring-shaped complexes (529 aa).

Positions 15–62 (MERQDERLRSLSEANDRLMAKNHALAKALTRATQELTKAKAQLNQLAG) form a coiled coil. 253–258 (GNGKTL) contacts ATP.

It belongs to the AAA ATPase family. Homohexamer. Assembles into a hexameric ring structure.

This chain is AAA ATPase forming ring-shaped complexes, found in Bifidobacterium dentium (strain ATCC 27534 / DSM 20436 / JCM 1195 / Bd1).